The primary structure comprises 480 residues: Proline--tRNA ligase (480 aa).

This sequence belongs to the class-II aminoacyl-tRNA synthetase family. ProS type 3 subfamily. In terms of assembly, homodimer.

It is found in the cytoplasm. It carries out the reaction tRNA(Pro) + L-proline + ATP = L-prolyl-tRNA(Pro) + AMP + diphosphate. Functionally, catalyzes the attachment of proline to tRNA(Pro) in a two-step reaction: proline is first activated by ATP to form Pro-AMP and then transferred to the acceptor end of tRNA(Pro). The chain is Proline--tRNA ligase from Chloroflexus aggregans (strain MD-66 / DSM 9485).